The chain runs to 254 residues: Alcohol dehydrogenase (254 aa).

10–33 (FVAGLGGIGLETSREIVKSGPKNL) is an NAD(+) binding site. A substrate-binding site is contributed by S138. Y151 functions as the Proton acceptor in the catalytic mechanism.

Belongs to the short-chain dehydrogenases/reductases (SDR) family. In terms of assembly, homodimer.

It carries out the reaction a primary alcohol + NAD(+) = an aldehyde + NADH + H(+). The catalysed reaction is a secondary alcohol + NAD(+) = a ketone + NADH + H(+). In Scaptomyza crassifemur (Fruit fly), this protein is Alcohol dehydrogenase (Adh).